The primary structure comprises 321 residues: Urease accessory protein UreD (321 aa).

This sequence belongs to the UreD family. UreD, UreF and UreG form a complex that acts as a GTP-hydrolysis-dependent molecular chaperone, activating the urease apoprotein by helping to assemble the nickel containing metallocenter of UreC. The UreE protein probably delivers the nickel.

It localises to the cytoplasm. Required for maturation of urease via the functional incorporation of the urease nickel metallocenter. In Yersinia pseudotuberculosis serotype O:1b (strain IP 31758), this protein is Urease accessory protein UreD.